We begin with the raw amino-acid sequence, 560 residues long: Calcium-binding and coiled-coil domain-containing protein 1-A (560 aa).

Coiled coils occupy residues 156-192 (KATF…EKRI) and 367-480 (WWQE…DKML). The disordered stretch occupies residues 480 to 517 (LMEDKTDSSPPTLSVDLSDSDDESPGDEGVSQQLGPCS). Low complexity predominate over residues 487-496 (SSPPTLSVDL).

Belongs to the CALCOCO family.

Its subcellular location is the cytoplasm. The protein resides in the nucleus. Functionally, may function as a coactivator for aryl hydrocarbon and nuclear receptors. This chain is Calcium-binding and coiled-coil domain-containing protein 1-A (calcoco1-a), found in Xenopus laevis (African clawed frog).